The chain runs to 207 residues: 8-oxoguanine DNA glycosylase/AP lyase (207 aa).

Residues Lys129 and Asp147 contribute to the active site.

Belongs to the type-2 OGG1 family.

It carries out the reaction 2'-deoxyribonucleotide-(2'-deoxyribose 5'-phosphate)-2'-deoxyribonucleotide-DNA = a 3'-end 2'-deoxyribonucleotide-(2,3-dehydro-2,3-deoxyribose 5'-phosphate)-DNA + a 5'-end 5'-phospho-2'-deoxyribonucleoside-DNA + H(+). Its function is as follows. Catalyzes the excision of an oxidatively damaged form of guanine (7,8-dihydro-8-oxoguanine = 8-oxoG) from DNA. Also cleaves the DNA backbone at apurinic/apyrimidinic sites (AP sites). The sequence is that of 8-oxoguanine DNA glycosylase/AP lyase from Thermotoga sp. (strain RQ2).